Consider the following 624-residue polypeptide: Chaperone protein HtpG (624 aa).

The interval 1–336 (MKGQETRGFQ…SSDLPLNVSR (336 aa)) is a; substrate-binding. A b region spans residues 337–552 (EILQDSTVTR…ADEMSTQMAK (216 aa)). Residues 553 to 624 (LFAAAGQKVP…IRRMNQLLVS (72 aa)) form a c region.

This sequence belongs to the heat shock protein 90 family. In terms of assembly, homodimer.

Its subcellular location is the cytoplasm. Its function is as follows. Molecular chaperone. Has ATPase activity. This chain is Chaperone protein HtpG, found in Escherichia coli O1:K1 / APEC.